Reading from the N-terminus, the 528-residue chain is Cytochrome b5 reductase 4 (528 aa).

An N-acetylmethionine modification is found at methionine 1. The tract at residues 1–29 is disordered; it reads MLNVPSQAFPAPGSQQRVSSQGRSKVPLK. Low complexity predominate over residues 13 to 24; that stretch reads GSQQRVSSQGRS. The region spanning 54 to 130 is the Cytochrome b5 heme-binding domain; that stretch reads LIEVTEEELK…LKECLVGRMA (77 aa). Heme is bound by residues histidine 89 and histidine 112. The 92-residue stretch at 172–263 folds into the CS domain; sequence LSSPSYDWFQ…KESVSWQCLG (92 aa). The region spanning 280–392 is the FAD-binding FR-type domain; it reads LYYRRCQLIS…SGPEGDFKVS (113 aa). FAD-binding positions include 372-387 and 399-431; these read DRLQIGDFISVSGPEG and DLFLLAAGTGFTPMVTVLNYALSHMSSLRKVKL.

This sequence belongs to the flavoprotein pyridine nucleotide cytochrome reductase family. FAD is required as a cofactor. As to expression, ubiquitously expressed. Isoform 2 is expressed in testis, brain, skeletal muscle and in the male germline.

It is found in the endoplasmic reticulum. The catalysed reaction is 2 Fe(III)-[cytochrome b5] + NADH = 2 Fe(II)-[cytochrome b5] + NAD(+) + H(+). NADH-cytochrome b5 reductase involved in endoplasmic reticulum stress response pathway. Plays a critical role in protecting pancreatic beta-cells against oxidant stress, possibly by protecting the cell from excess buildup of reactive oxygen species (ROS). The chain is Cytochrome b5 reductase 4 (Cyb5r4) from Mus musculus (Mouse).